We begin with the raw amino-acid sequence, 445 residues long: GTPase Der (445 aa).

EngA-type G domains follow at residues 3-167 and 180-353; these read PVIA…YAGQ and IKIA…AAAM. Residues 9–16, 56–60, 119–122, 186–193, 233–237, and 298–301 each bind GTP; these read GRPNVGKS, DTGGF, NKAE, DTAGL, and NKWD. The 85-residue stretch at 354-438 folds into the KH-like domain; sequence AKLPTPKLTR…PLRIEFRSSN (85 aa).

The protein belongs to the TRAFAC class TrmE-Era-EngA-EngB-Septin-like GTPase superfamily. EngA (Der) GTPase family. Associates with the 50S ribosomal subunit.

Its function is as follows. GTPase that plays an essential role in the late steps of ribosome biogenesis. In Burkholderia cenocepacia (strain HI2424), this protein is GTPase Der.